The following is a 257-amino-acid chain: Expansin-A10 (257 aa).

Residues 1–18 (MAPCLLLVLFLLPALATG) form the signal peptide. The region spanning 50 to 163 (GGACGFGDLG…RRVNCLRDGG (114 aa)) is the Expansin-like EG45 domain. In terms of domain architecture, Expansin-like CBD spans 173-252 (FFLTVLISNV…EWDFGKTYTG (80 aa)).

The protein belongs to the expansin family. Expansin A subfamily. Expressed in panicles and flowers.

It localises to the secreted. Its subcellular location is the cell wall. The protein resides in the membrane. Its function is as follows. May cause loosening and extension of plant cell walls by disrupting non-covalent bonding between cellulose microfibrils and matrix glucans. No enzymatic activity has been found. May be required for rapid internodal elongation in deepwater rice during submergence. This is Expansin-A10 (EXPA10) from Oryza sativa subsp. japonica (Rice).